Reading from the N-terminus, the 380-residue chain is Cytochrome b (380 aa).

Transmembrane regions (helical) follow at residues 34–54 (FGSL…LLAM), 78–99 (WLIR…YFHI), 114–134 (WNTG…GYVL), and 179–199 (FFAL…IHLT). Positions 84 and 98 each coordinate heme b. Heme b is bound by residues histidine 183 and histidine 197. Histidine 202 contacts a ubiquinone. 4 helical membrane-spanning segments follow: residues 227–247 (LKDI…ALFS), 289–309 (LGGV…PFLH), 321–341 (ISQL…WVGS), and 348–368 (FIII…VLFP).

Belongs to the cytochrome b family. In terms of assembly, the cytochrome bc1 complex contains 11 subunits: 3 respiratory subunits (MT-CYB, CYC1 and UQCRFS1), 2 core proteins (UQCRC1 and UQCRC2) and 6 low-molecular weight proteins (UQCRH/QCR6, UQCRB/QCR7, UQCRQ/QCR8, UQCR10/QCR9, UQCR11/QCR10 and a cleavage product of UQCRFS1). This cytochrome bc1 complex then forms a dimer. Heme b serves as cofactor.

It is found in the mitochondrion inner membrane. Its function is as follows. Component of the ubiquinol-cytochrome c reductase complex (complex III or cytochrome b-c1 complex) that is part of the mitochondrial respiratory chain. The b-c1 complex mediates electron transfer from ubiquinol to cytochrome c. Contributes to the generation of a proton gradient across the mitochondrial membrane that is then used for ATP synthesis. This is Cytochrome b (MT-CYB) from Pachyptila turtur (Fairy prion).